The chain runs to 618 residues: Chaperone protein HscA homolog (618 aa).

This sequence belongs to the heat shock protein 70 family.

In terms of biological role, chaperone involved in the maturation of iron-sulfur cluster-containing proteins. Has a low intrinsic ATPase activity which is markedly stimulated by HscB. The polypeptide is Chaperone protein HscA homolog (Methylibium petroleiphilum (strain ATCC BAA-1232 / LMG 22953 / PM1)).